We begin with the raw amino-acid sequence, 277 residues long: S-formylglutathione hydrolase FrmB (277 aa).

Residues serine 145, aspartate 221, and histidine 254 each act as charge relay system in the active site.

The protein belongs to the esterase D family.

It catalyses the reaction S-formylglutathione + H2O = formate + glutathione + H(+). Functionally, serine hydrolase involved in the detoxification of formaldehyde. Hydrolyzes S-formylglutathione to glutathione and formate. This chain is S-formylglutathione hydrolase FrmB (frmB), found in Escherichia coli (strain ATCC 8739 / DSM 1576 / NBRC 3972 / NCIMB 8545 / WDCM 00012 / Crooks).